Consider the following 287-residue polypeptide: Syntaxin-11 (287 aa).

Positions 41-71 (LESLYRDIRDIQDENQLLVADVKRLGKQNAR) form a coiled coil. A t-SNARE coiled-coil homology domain is found at 204–266 (LNEIESRHRE…GQAKAQVRKA (63 aa)).

This sequence belongs to the syntaxin family. As to quaternary structure, interacts with the SNARE proteins SNAP-23 and VAMP.

It is found in the membrane. It localises to the golgi apparatus. Its subcellular location is the trans-Golgi network membrane. In terms of biological role, SNARE that acts to regulate protein transport between late endosomes and the trans-Golgi network. The sequence is that of Syntaxin-11 (STX11) from Homo sapiens (Human).